A 489-amino-acid polypeptide reads, in one-letter code: Rhamnulokinase (489 aa).

Residue 13 to 17 (ASSGR) participates in ATP binding. A disulfide bridge links Cys68 with Cys222. Residues Gly83 and 236-238 (HDT) each bind substrate. Asp237 (proton acceptor) is an active-site residue. Position 259 (Thr259) interacts with ATP. Residue Asn296 participates in substrate binding. Residue Gln304 coordinates ATP. Cys353 and Cys370 are disulfide-bonded. Position 402 (Gly402) interacts with ATP. Cys413 and Cys417 form a disulfide bridge.

The protein belongs to the rhamnulokinase family. Mg(2+) is required as a cofactor.

The catalysed reaction is L-rhamnulose + ATP = L-rhamnulose 1-phosphate + ADP + H(+). It participates in carbohydrate degradation; L-rhamnose degradation; glycerone phosphate from L-rhamnose: step 2/3. Its function is as follows. Involved in the catabolism of L-rhamnose (6-deoxy-L-mannose). Catalyzes the transfer of the gamma-phosphate group from ATP to the 1-hydroxyl group of L-rhamnulose to yield L-rhamnulose 1-phosphate. The protein is Rhamnulokinase of Salmonella paratyphi A (strain AKU_12601).